The following is a 1018-amino-acid chain: Contactin-1 (1018 aa).

The signal sequence occupies residues 1 to 20; that stretch reads MKMWLLFSLLVIISFKTCLS. Ig-like C2-type domains follow at residues 41-131, 137-223, 241-326, 331-407, 413-500, and 504-601; these read PIFE…ATLS, PFPP…KSVF, PADI…ARIY, PEWV…AELK, PTFE…GTLV, and PTRI…LVVR. Cystine bridges form between Cys-65/Cys-114 and Cys-158/Cys-211. 2 N-linked (GlcNAc...) asparagine glycosylation sites follow: Asn-208 and Asn-258. Cys-263 and Cys-310 are oxidised to a cystine. Asn-338 carries N-linked (GlcNAc...) asparagine glycosylation. Disulfide bonds link Cys-352–Cys-391 and Cys-436–Cys-484. N-linked (GlcNAc...) asparagine glycosylation is found at Asn-457, Asn-473, Asn-494, and Asn-521. Cysteines 526 and 583 form a disulfide. An N-linked (GlcNAc...) asparagine glycan is attached at Asn-591. Fibronectin type-III domains lie at 606 to 704, 709 to 806, 811 to 906, and 907 to 1000; these read PPGG…TDGA, APSD…SAQD, APTA…APPS, and QPPR…ILSP. Disordered stretches follow at residues 698–718 and 891–910; these read KIKT…GGGG and PPSD…QPPR. Ser-999 is lipidated: GPI-anchor amidated serine. Positions 1000-1018 are cleaved as a propeptide — removed in mature form; the sequence is PCLLGFLLPALGILVYLEF.

Belongs to the immunoglobulin superfamily. Contactin family. In terms of assembly, monomer. Interacts with CNTNAP1 in cis form. Binds to the carbonic-anhydrase like domain of PTPRZ1. Interacts with NOTCH1 and TNR. Detected in a complex with NRCAM and PTPRB. Interacts with TASOR.

It localises to the cell membrane. Its function is as follows. Contactins mediate cell surface interactions during nervous system development. Involved in the formation of paranodal axo-glial junctions in myelinated peripheral nerves and in the signaling between axons and myelinating glial cells via its association with CNTNAP1. Participates in oligodendrocytes generation by acting as a ligand of NOTCH1. Its association with NOTCH1 promotes NOTCH1 activation through the released notch intracellular domain (NICD) and subsequent translocation to the nucleus. Interaction with TNR induces a repulsion of neurons and an inhibition of neurite outgrowth. The chain is Contactin-1 (CNTN1) from Bos taurus (Bovine).